A 484-amino-acid chain; its full sequence is Chromosomal replication initiator protein DnaA (484 aa).

The interval 1–74 is domain I, interacts with DnaA modulators; that stretch reads MEKSKNIWSL…ILTKNGYNNV (74 aa). Residues 74-139 are domain II; it reads VTIVFTNQPP…EEEPTNFKNP (66 aa). Positions 140-356 are domain III, AAA+ region; that stretch reads FLKKRYTFEN…AAVTKLKAYI (217 aa). Gly184, Gly186, Lys187, and Thr188 together coordinate ATP. Residues 357–484 form a domain IV, binds dsDNA region; the sequence is DLDNIEIDID…TELMNKIKKN (128 aa).

This sequence belongs to the DnaA family. As to quaternary structure, oligomerizes as a right-handed, spiral filament on DNA at oriC.

The protein localises to the cytoplasm. Functionally, plays an essential role in the initiation and regulation of chromosomal replication. ATP-DnaA binds to the origin of replication (oriC) to initiate formation of the DNA replication initiation complex once per cell cycle. Binds the DnaA box (a 9 base pair repeat at the origin) and separates the double-stranded (ds)DNA. Forms a right-handed helical filament on oriC DNA; dsDNA binds to the exterior of the filament while single-stranded (ss)DNA is stabiized in the filament's interior. The ATP-DnaA-oriC complex binds and stabilizes one strand of the AT-rich DNA unwinding element (DUE), permitting loading of DNA polymerase. After initiation quickly degrades to an ADP-DnaA complex that is not apt for DNA replication. Binds acidic phospholipids. This Borrelia garinii subsp. bavariensis (strain ATCC BAA-2496 / DSM 23469 / PBi) (Borreliella bavariensis) protein is Chromosomal replication initiator protein DnaA.